Reading from the N-terminus, the 834-residue chain is Arf-GAP with coiled-coil, ANK repeat and PH domain-containing protein 3 (834 aa).

The region spanning 268 to 363 is the PH domain; it reads GVVMEGYLFK…WVQAVQASIA (96 aa). A disordered region spans residues 375–400; it reads SERLDRTASPSTSSIDSATDTRERGV. Over residues 382 to 392 the composition is skewed to polar residues; that stretch reads ASPSTSSIDSA. Residues 403–525 form the Arf-GAP domain; the sequence is ESVLQRVQSV…KFLRKAPMAP (123 aa). A C4-type zinc finger spans residues 418-441; that stretch reads CGDCGQPDPRWASINLGVLLCIEC. The disordered stretch occupies residues 633–653; sequence SVTEEEGAESEESSGEADGDT. Acidic residues predominate over residues 634-653; the sequence is VTEEEGAESEESSGEADGDT. ANK repeat units lie at residues 702–731, 735–764, and 768–797; these read EGKTPLVQAVLGGSLIVCEFLLQNGADVNQ, RGRAPLHHATLLGRTGQVCLFLKRGADQHA, and EQRDPLAIAVQAANADIVTLLRLARMAEEM.

In terms of biological role, GTPase-activating protein for the ADP ribosylation factor family. This is Arf-GAP with coiled-coil, ANK repeat and PH domain-containing protein 3 (ACAP3) from Homo sapiens (Human).